The primary structure comprises 427 residues: Serine hydroxymethyltransferase (427 aa).

Residue 120-122 (GHI) coordinates (6S)-5,6,7,8-tetrahydrofolate. Lysine 226 is subject to N6-(pyridoxal phosphate)lysine.

The protein belongs to the SHMT family. In terms of assembly, homodimer. It depends on pyridoxal 5'-phosphate as a cofactor.

Its subcellular location is the cytoplasm. It participates in amino-acid biosynthesis; glycine biosynthesis; glycine from L-serine: step 1/1. Catalyzes the reversible interconversion of serine and glycine with a modified folate serving as the one-carbon carrier. Also exhibits a pteridine-independent aldolase activity toward beta-hydroxyamino acids, producing glycine and aldehydes, via a retro-aldol mechanism. The polypeptide is Serine hydroxymethyltransferase (Pyrococcus abyssi (strain GE5 / Orsay)).